We begin with the raw amino-acid sequence, 219 residues long: Octanoyltransferase (219 aa).

The BPL/LPL catalytic domain maps to 31 to 206; the sequence is DEDVDQIWLV…ELVELLGYDQ (176 aa). Substrate is bound by residues 70 to 77, 137 to 139, and 150 to 152; these read RGGQVTYH, SLG, and GLA. Catalysis depends on Cys-168, which acts as the Acyl-thioester intermediate.

Belongs to the LipB family.

The protein localises to the cytoplasm. It catalyses the reaction octanoyl-[ACP] + L-lysyl-[protein] = N(6)-octanoyl-L-lysyl-[protein] + holo-[ACP] + H(+). It participates in protein modification; protein lipoylation via endogenous pathway; protein N(6)-(lipoyl)lysine from octanoyl-[acyl-carrier-protein]: step 1/2. Its function is as follows. Catalyzes the transfer of endogenously produced octanoic acid from octanoyl-acyl-carrier-protein onto the lipoyl domains of lipoate-dependent enzymes. Lipoyl-ACP can also act as a substrate although octanoyl-ACP is likely to be the physiological substrate. This Vibrio atlanticus (strain LGP32) (Vibrio splendidus (strain Mel32)) protein is Octanoyltransferase.